The primary structure comprises 1948 residues: [F-actin]-monooxygenase MICAL2 (1948 aa).

The monooxygenase domain stretch occupies residues 2–494; it reads GENEDEKQAQ…KHLYITKEMD (493 aa). FAD contacts are provided by residues Cys-97, 116–118, 123–125, Phe-183, Tyr-298, and Asp-398; these read EKR and RNN. A Calponin-homology (CH) domain is found at 516–619; the sequence is DIRPNKLLTW…MVMYLSKFYE (104 aa). Ser-631 carries the phosphoserine modification. Residues 660–681 carry the Nuclear localization signal motif; it reads RKRTPRVDAQTEENDVNKRRRQ. Disordered stretches follow at residues 664–709, 753–776, and 891–923; these read PRVD…ESGN, SRPPGTSHCPKLEESTPRLPPPLK, and KRVPHAHPPSPPSCLPSPDPAAAPSPPAADSVS. Over residues 693 to 709 the composition is skewed to polar residues; that stretch reads SSRSLGSSQEYAKESGN. Over residues 896-917 the composition is skewed to pro residues; that stretch reads AHPPSPPSCLPSPDPAAAPSPP. One can recognise an LIM zinc-binding domain in the interval 980 to 1042; sequence DTCYFCKKRV…KLHFAHCKTS (63 aa). Cys-982, Cys-985, His-1003, Cys-1006, Cys-1009, Cys-1012, Cys-1032, and His-1035 together coordinate Zn(2+). 3 disordered regions span residues 1045-1134, 1146-1185, and 1233-1298; these read QRKR…GQDG, SEDSSSDTESDSGSIIGPCTEACEERPRLPESPPLSQPLT, and QSNS…DDVS. Positions 1050-1059 are enriched in basic and acidic residues; it reads AELNQQREEE. A compositionally biased stretch (polar residues) spans 1233 to 1243; sequence QSNSTPMNQRA. Low complexity predominate over residues 1254 to 1271; it reads SSSSSPSLPSSFSSASVP. Positions 1277–1292 are enriched in polar residues; it reads DSSSPQVTYNLHSPQI. Positions 1300–1339 are interaction with MAPK1; it reads TPIYLRRARAQGITKEIPLYLPHSPMLESTEHCLVSPDGE. Disordered stretches follow at residues 1478–1505, 1519–1622, 1672–1726, and 1739–1767; these read QKKALGETRTPAAKAPREREVPPPKSPL, SSEA…SSKV, GDFF…QAGK, and SGPGAPVTEDTSSPTSSSAEEDVETQLSS. Basic and acidic residues predominate over residues 1522–1534; the sequence is AGKKTSSKPETKT. The segment covering 1570–1579 has biased composition (low complexity); that stretch reads KASAFFSLAS. Over residues 1580 to 1591 the composition is skewed to polar residues; it reads PTSKAAQASDLS. Over residues 1672 to 1682 the composition is skewed to basic and acidic residues; sequence GDFFNSPKEKG. Ser-1677 is modified (phosphoserine). Composition is skewed to polar residues over residues 1698-1715 and 1747-1756; these read VDSTSMGQVAHPSSTGQD and EDTSSPTSSS. The region spanning 1786–1936 is the bMERB domain; that stretch reads KQEELKRLHK…ERTQDQHFEN (151 aa).

This sequence belongs to the Mical family. In terms of assembly, interacts with PLXNA4. Interacts with RAB1B. Interacts with MAPK1/ERK2. Interacts with RAB35, RAB8A, RAB10, RAB13 and RAB15 (in their GTP-bound forms); binding to RAB35 is of low affinity compared to other Rab proteins; at least in case of RAB8A may bind 2 molecules of RAB8A simultaneously through a high and a low affinity binding site, respectively. May interact with MAPK1/ERK2. FAD serves as cofactor.

It is found in the nucleus. Its subcellular location is the cytoplasm. It carries out the reaction L-methionyl-[F-actin] + NADPH + O2 + H(+) = L-methionyl-(R)-S-oxide-[F-actin] + NADP(+) + H2O. In terms of biological role, methionine monooxygenase that promotes depolymerization of F-actin by mediating oxidation of residues 'Met-44' and 'Met-47' on actin to form methionine-sulfoxide, resulting in actin filament disassembly and preventing repolymerization. Regulates the disassembly of branched actin networks also by oxidizing ARP3B-containing ARP2/3 complexes leading to ARP3B dissociation from the network. Acts as a key regulator of the SRF signaling pathway elicited by nerve growth factor and serum: mediates oxidation and subsequent depolymerization of nuclear actin, leading to increase MKL1/MRTF-A presence in the nucleus and promote SRF:MKL1/MRTF-A-dependent gene transcription. Does not activate SRF:MKL1/MRTF-A through RhoA. The protein is [F-actin]-monooxygenase MICAL2 of Rattus norvegicus (Rat).